The chain runs to 508 residues: Zinc finger CCCH-type with G patch domain-containing protein (508 aa).

The tract at residues Q67–V86 is disordered. The span at E69–V86 shows a compositional bias: basic and acidic residues. Residues R161–L188 form a C3H1-type zinc finger. Positions I253–A282 are disordered. The span at E259–S269 shows a compositional bias: acidic residues. Positions Q270–S279 are enriched in low complexity. The region spanning T310–E356 is the G-patch domain. Positions S404–A426 are disordered.

The protein resides in the nucleus. Transcription repressor. The sequence is that of Zinc finger CCCH-type with G patch domain-containing protein from Nematostella vectensis (Starlet sea anemone).